Reading from the N-terminus, the 444-residue chain is Probable D-serine dehydratase (444 aa).

Position 110 is an N6-(pyridoxal phosphate)lysine (Lys-110).

It belongs to the serine/threonine dehydratase family. DsdA subfamily. Pyridoxal 5'-phosphate serves as cofactor.

The catalysed reaction is D-serine = pyruvate + NH4(+). This Burkholderia thailandensis (strain ATCC 700388 / DSM 13276 / CCUG 48851 / CIP 106301 / E264) protein is Probable D-serine dehydratase.